We begin with the raw amino-acid sequence, 433 residues long: Alpha-(1,3)-fucosyltransferase 4 (433 aa).

A disordered region spans residues 1–20; sequence MAPAGRKLQHESRCRPSRPV. Topologically, residues 1–54 are cytoplasmic; sequence MAPAGRKLQHESRCRPSRPVDAWRAAATTRGRCMGTPGARRTARRGGWGLPRTS. Residues 55 to 74 traverse the membrane as a helical; Signal-anchor for type II membrane protein segment; it reads SGLAAAGLLCTALTACLCWG. At 75 to 433 the chain is on the lumenal side; the sequence is QLPPLPWASP…IHNLADWFQR (359 aa). 2 N-linked (GlcNAc...) asparagine glycosylation sites follow: N117 and N218.

It belongs to the glycosyltransferase 10 family. As to expression, in adult, highest expression in spleen, testis, brain, lung, kidney and skeletal muscle and to a lesser extent in liver and heart.

It localises to the golgi apparatus. Its subcellular location is the golgi stack membrane. It catalyses the reaction a beta-D-galactosyl-(1-&gt;4)-N-acetyl-beta-D-glucosaminyl derivative + GDP-beta-L-fucose = a beta-D-galactosyl-(1-&gt;4)-[alpha-L-fucosyl-(1-&gt;3)]-N-acetyl-beta-D-glucosaminyl derivative + GDP + H(+). The catalysed reaction is an N-acetyl-alpha-neuraminyl-(2-&gt;3)-beta-D-galactosyl-(1-&gt;4)-N-acetyl-beta-D-glucosaminyl derivative + GDP-beta-L-fucose = an alpha-Neu5Ac-(2-&gt;3)-beta-D-Gal-(1-&gt;4)-[alpha-L-Fuc-(1-&gt;3)]-beta-D-GlcNAc derivative + GDP + H(+). The enzyme catalyses an alpha-Neu5Ac-(2-&gt;3)-beta-D-Gal-(1-&gt;4)-beta-D-GlcNAc-(1-&gt;3)-beta-D-Gal-(1-&gt;4)-beta-D-GlcNAc derivative + GDP-beta-L-fucose = an alpha-Neu5Ac-(2-&gt;3)-beta-D-Gal-(1-&gt;4)-beta-D-GlcNAc-(1-&gt;3)-beta-D-Gal-(1-&gt;4)-[alpha-L-Fuc-(1-&gt;3)]-beta-D-GlcNAc derivative + GDP + H(+). It carries out the reaction an alpha-Neu5Ac-(2-&gt;3)-beta-D-Gal-(1-&gt;4)-beta-D-GlcNAc6S derivative + GDP-beta-L-fucose = an alpha-Neu5Ac-(2-&gt;3)-beta-D-Gal-(1-&gt;4)-[alpha-L-Fuc-(1-&gt;3)]-beta-D-GlcNAc6S derivative + GDP + H(+). It participates in protein modification; protein glycosylation. In terms of biological role, catalyzes alpha(1-&gt;3) linkage of fucosyl moiety transferred from GDP-beta-L-fucose to N-acetyl glucosamine (GlcNAc) within type 2 lactosamine (LacNAc, Gal-beta(1-&gt;4)GlcNAc) glycan attached to N- or O-linked glycoproteins. Robustly fucosylates nonsialylated distal LacNAc unit of the polylactosamine chain to form Lewis X antigen (CD15), a glycan determinant known to mediate important cellular functions in development and immunity. Fucosylates with lower efficiency sialylated LacNAc acceptors to form sialyl Lewis X and 6-sulfo sialyl Lewis X determinants that serve as recognition epitopes for C-type lectins. Together with FUT7 contributes to SELE, SELL and SELP selectin ligand biosynthesis and selectin-dependent lymphocyte homing, leukocyte migration and blood leukocyte homeostasis. In a cell type specific manner, may also fucosylate the internal LacNAc unit of the polylactosamine chain to form VIM-2 antigen that serves as recognition epitope for SELE. The sequence is that of Alpha-(1,3)-fucosyltransferase 4 (Fut4) from Rattus norvegicus (Rat).